The sequence spans 226 residues: Urease accessory protein UreF (226 aa).

Belongs to the UreF family. In terms of assembly, ureD, UreF and UreG form a complex that acts as a GTP-hydrolysis-dependent molecular chaperone, activating the urease apoprotein by helping to assemble the nickel containing metallocenter of UreC. The UreE protein probably delivers the nickel.

It localises to the cytoplasm. Required for maturation of urease via the functional incorporation of the urease nickel metallocenter. The sequence is that of Urease accessory protein UreF from Burkholderia cenocepacia (strain HI2424).